The primary structure comprises 226 residues: PKHD-type hydroxylase BP3529 (226 aa).

A Fe2OG dioxygenase domain is found at lysine 78–serine 178. Fe cation contacts are provided by histidine 96, aspartate 98, and histidine 159. Position 169 (arginine 169) interacts with 2-oxoglutarate.

Fe(2+) serves as cofactor. L-ascorbate is required as a cofactor.

This is PKHD-type hydroxylase BP3529 from Bordetella pertussis (strain Tohama I / ATCC BAA-589 / NCTC 13251).